Reading from the N-terminus, the 706-residue chain is K(+)-insensitive pyrophosphate-energized proton pump (706 aa).

The next 5 membrane-spanning stretches (helical) occupy residues 1-21, 62-82, 83-103, 128-148, and 164-184; these read MTAL…AIWA, IVIF…GFAI, GAIL…RANV, GMLV…FLVY, and VALG…GGIF. Lys186 contacts substrate. Mg(2+) contacts are provided by Asp189, Asp193, Asn216, and Asp219. The next 6 membrane-spanning stretches (helical) occupy residues 231–251, 261–281, 298–318, 328–348, 376–398, and 412–432; these read LFET…IFFA, TLPL…TFFV, IATG…LIGF, GMSL…IIWI, IQGL…AGIL, and ATAT…FGPV. Asp434 provides a ligand contact to Mg(2+). The next 4 membrane-spanning stretches (helical) occupy residues 465-485, 516-536, 585-605, and 616-636; these read AVTK…LFAA, YVVV…AMGM, IIPS…IYAI, and AFSA…FVAI. Ca(2+) is bound by residues Asp646, Asp672, and Asp676. Position 679 (Lys679) interacts with substrate. Residues 685-705 form a helical membrane-spanning segment; that stretch reads AVNPMIKITNIVALLLLAILA.

It belongs to the H(+)-translocating pyrophosphatase (TC 3.A.10) family. K(+)-insensitive subfamily. As to quaternary structure, homodimer. Requires Mg(2+) as cofactor.

Its subcellular location is the cell inner membrane. It carries out the reaction diphosphate + H2O + H(+)(in) = 2 phosphate + 2 H(+)(out). Its function is as follows. Proton pump that utilizes the energy of pyrophosphate hydrolysis as the driving force for proton movement across the membrane. Generates a proton motive force. The protein is K(+)-insensitive pyrophosphate-energized proton pump of Bradyrhizobium diazoefficiens (strain JCM 10833 / BCRC 13528 / IAM 13628 / NBRC 14792 / USDA 110).